The following is a 159-amino-acid chain: SsrA-binding protein (159 aa).

Residues 137 to 159 are disordered; the sequence is DKRETEKQRDWSREKGRLLKERG.

Belongs to the SmpB family.

It is found in the cytoplasm. Its function is as follows. Required for rescue of stalled ribosomes mediated by trans-translation. Binds to transfer-messenger RNA (tmRNA), required for stable association of tmRNA with ribosomes. tmRNA and SmpB together mimic tRNA shape, replacing the anticodon stem-loop with SmpB. tmRNA is encoded by the ssrA gene; the 2 termini fold to resemble tRNA(Ala) and it encodes a 'tag peptide', a short internal open reading frame. During trans-translation Ala-aminoacylated tmRNA acts like a tRNA, entering the A-site of stalled ribosomes, displacing the stalled mRNA. The ribosome then switches to translate the ORF on the tmRNA; the nascent peptide is terminated with the 'tag peptide' encoded by the tmRNA and targeted for degradation. The ribosome is freed to recommence translation, which seems to be the essential function of trans-translation. The chain is SsrA-binding protein from Mesorhizobium japonicum (strain LMG 29417 / CECT 9101 / MAFF 303099) (Mesorhizobium loti (strain MAFF 303099)).